A 570-amino-acid polypeptide reads, in one-letter code: Ferroportin (570 aa).

The Cytoplasmic segment spans residues 1–23 (MTKSRDQTHQEGCCGSLANYLTS). A helical transmembrane segment spans residues 24–53 (AKFLLYLGHSLSTWGDRMWHFAVSVFLVEL). 2 residues coordinate Fe cation: Asp39 and His43. Residues 54–57 (YGNS) are Extracellular-facing. Residues 58-84 (LLLTAVYGLVVAGSVLVLGAIIGDWVD) form a helical membrane-spanning segment. At 85 to 87 (KNA) the chain is on the cytoplasmic side. A helical transmembrane segment spans residues 88–118 (RLKVAQTSLVVQNVSVILCGIILMMVFLHKN). The Extracellular segment spans residues 119 to 126 (ELLNMYHG). The helical transmembrane segment at 127 to 162 (WVLTVCYILIITIANIANLASTATAITIQRDWIVVV) threads the bilayer. The Cytoplasmic portion of the chain corresponds to 163–164 (AG). Residues 165–195 (ENRSRLADMNATIRRIDQLTNILAPMAVGQI) traverse the membrane as a helical segment. Residues 196–202 (MTFGSPV) lie on the Extracellular side of the membrane. Residues 203–229 (IGCGFISGWNLVSMCVEYFLLWKVYQK) form a helical membrane-spanning segment. The Cytoplasmic portion of the chain corresponds to 230-306 (TPALAVKAAL…DGWVSYYNQP (77 aa)). Residues 307 to 333 (VFLAGMGLAFLYMTVLGFDCITTGYAY) form a helical membrane-spanning segment. Cys326 contacts Fe cation. Residues 334-338 (TQGLS) lie on the Extracellular side of the membrane. Residues 339–366 (GSILSVLMGASAITGIMGTVAFTWLRRK) traverse the membrane as a helical segment. Residues 367-368 (CG) are Cytoplasmic-facing. Residues 369–391 (LVRTGLFSGLAQLSCLILCVISV) form a helical membrane-spanning segment. Topologically, residues 392 to 452 (FMPGSPLDLS…EMSTKSVPII (61 aa)) are extracellular. The chain crosses the membrane as a helical span at residues 453–482 (SVSLLFAGVIAARIGLWSFDLTVTQLLQEN). At 483-487 (VIESE) the chain is on the cytoplasmic side. Residues 488–512 (RGIINGVQNSMNYLLDLLHFIMVIL) form a helical membrane-spanning segment. A Fe cation-binding site is contributed by His506. The Extracellular segment spans residues 513-515 (APN). Residues 516–541 (PEAFGLLVLISVSFVAMGHLMYFRFA) form a helical membrane-spanning segment. Topologically, residues 542–570 (QKTLGNQIFVCAPDEKEVTDESQPNTSVV) are cytoplasmic.

The protein belongs to the ferroportin (FP) (TC 2.A.100) family. SLC40A subfamily. As to quaternary structure, identified in a complex with STOM. Interacts with HAMP; affinity of the peptide hormone HAMP for SLC40A1 increases by 80-fold in the presence of iron and the interaction promotes SLC40A1 ubiquitination and degradation. Part of a complex composed of SLC40A1/ferroportin, TF/transferrin and HEPH/hephaestin that transfers iron from cells to transferrin. Polyubiquitinated by RNF217; leading to proteasomal degradation. Under conditions of high systemic iron levels, both the hormone peptide hepcidin/HAMP and holo(iron bound)-transferrin/TF induce the ubiquitination, internalization and proteasomal degradation of SLC40A1 to control iron release from cells.

Its subcellular location is the cell membrane. The protein localises to the basolateral cell membrane. The catalysed reaction is Fe(2+)(in) = Fe(2+)(out). During elevated serum iron levels, liver-derived hepcidin/HAMP negatively regulates cell surface SLC40A1 by inducing its ubiquitination, internalization, and degradation. Indeed, hepcidin/HAMP affinity towards ferroportin/SLC40A1 increases by 80-fold in the presence of iron. Functionally, transports Fe(2+) from the inside of a cell to the outside of the cell, playing a key role for maintaining systemic iron homeostasis. Transports iron from intestinal, splenic, hepatic cells, macrophages and erythrocytes into the blood to provide iron to other tissues. Controls therefore dietary iron uptake, iron recycling by macrophages and erythrocytes, and release of iron stores in hepatocytes. When iron is in excess in serum, circulating HAMP/hepcidin levels increase resulting in a degradation of SLC40A1, thus limiting the iron efflux to plasma. This Rattus norvegicus (Rat) protein is Ferroportin.